Consider the following 278-residue polypeptide: Digeranylgeranylglyceryl phosphate synthase (278 aa).

7 helical membrane passes run 12–32 (LKNC…ASYF), 34–54 (ISMI…CGFG), 91–111 (LLVV…LMAV), 142–162 (VFIF…LFLC), 204–224 (FLLV…FFGI), 226–246 (YLIS…NLVM), and 257–277 (SRNI…GSLF).

The protein belongs to the UbiA prenyltransferase family. DGGGP synthase subfamily. The cofactor is Mg(2+).

The protein localises to the cell membrane. The catalysed reaction is sn-3-O-(geranylgeranyl)glycerol 1-phosphate + (2E,6E,10E)-geranylgeranyl diphosphate = 2,3-bis-O-(geranylgeranyl)-sn-glycerol 1-phosphate + diphosphate. The protein operates within membrane lipid metabolism; glycerophospholipid metabolism. Functionally, prenyltransferase that catalyzes the transfer of the geranylgeranyl moiety of geranylgeranyl diphosphate (GGPP) to the C2 hydroxyl of (S)-3-O-geranylgeranylglyceryl phosphate (GGGP). This reaction is the second ether-bond-formation step in the biosynthesis of archaeal membrane lipids. In Methanococcus maripaludis (strain C6 / ATCC BAA-1332), this protein is Digeranylgeranylglyceryl phosphate synthase.